The sequence spans 1272 residues: CST complex subunit CTC1 (1272 aa).

It belongs to the CTC1 family. Component of the CST complex, composed of CTC1, TEN1 and STN1. Interacts with POT1A.

It localises to the nucleus. The protein localises to the chromosome. Its subcellular location is the telomere. Component of the CST complex, a complex that binds to single-stranded DNA and is required to protect telomeres from DNA degradation. The CST complex binds single-stranded DNA with high affinity in a sequence-independent manner, while isolated subunits bind DNA with low affinity by themselves. Associates with enzymatically active telomerase. This is CST complex subunit CTC1 from Arabidopsis thaliana (Mouse-ear cress).